Consider the following 744-residue polypeptide: Zinc finger protein 483 (744 aa).

In terms of domain architecture, SCAN box spans 52-134 (RQRFRWFCYS…TLIEDLTQML (83 aa)). The interval 137–156 (KDPVSQDSTVSQEENSKEDK) is disordered. Residues 170 to 241 (ITLKDVAVNF…EEVSKSSRLD (72 aa)) enclose the KRAB domain. Disordered stretches follow at residues 263–308 (ESQQ…SPFG) and 350–385 (KEKTAGEKSRKSNDGGKVLSHSSALTEHQKRQKIHL). Residues 277–293 (NQGNSKGRVAQNKTLGS) are compositionally biased toward polar residues. Composition is skewed to basic and acidic residues over residues 298–308 (KKFDPDKSPFG) and 350–363 (KEKTAGEKSRKSND). 11 consecutive C2H2-type zinc fingers follow at residues 439–461 (HKCSKCGKAFGYSASLTKHRRIH), 467–489 (YMCNECGKAFSDSSSLTPHHRTH), 495–517 (FKCDDCGKGFTLSAHLIKHQRIH), 523–545 (YKCKDCGRPFSDSSSLIQHQRIH), 551–573 (YTCSNCGKSFSHSSSLSKHQRIH), 579–601 (YKCGECGKAFRQNSCLTRHQRIH), 607–629 (YLCNDCGMTFSHFTSVIYHQRLH), 635–657 (YKCNQCEKAFPTHSLLSRHQRIH), 663–685 (YKCKECGKSFSQSSSLNEHHRIH), 691–713 (YECNYCGATFSRSSILVEHLKIH), and 719–741 (YECNECEKTFKSNSGLIRHRGFH).

It belongs to the krueppel C2H2-type zinc-finger protein family.

It localises to the nucleus. May be involved in transcriptional regulation. This is Zinc finger protein 483 (ZNF483) from Homo sapiens (Human).